The sequence spans 205 residues: Ephrin-A1 (205 aa).

The N-terminal stretch at Met-1–Ala-18 is a signal peptide. The 133-residue stretch at Asp-19–Ile-151 folds into the Ephrin RBD domain. A glycan (N-linked (GlcNAc...) asparagine) is linked at Asn-26. 2 cysteine pairs are disulfide-bonded: Cys-51-Cys-92 and Cys-80-Cys-140. Ser-182 carries the GPI-anchor amidated serine lipid modification. The propeptide at Ala-183–Pro-205 is removed in mature form.

Belongs to the ephrin family. In terms of assembly, monomer. Homodimer. Forms heterodimers with EPHA2. Binds to the receptor tyrosine kinases EPHA2, EPHA3, EPHA4, EPHA5, EPHA6 and EPHA7. Also binds with low affinity to EPHA1. Post-translationally, undergoes proteolysis by a metalloprotease to give rise to a soluble monomeric form. N-Glycosylation is required for binding to EPHA2 receptor and inducing its internalization. In terms of tissue distribution, brain. Down-regulated in primary glioma tissues compared to the normal tissues. The soluble monomeric form is expressed in the glioblastoma multiforme (GBM) and breast cancer cells (at protein level).

It localises to the cell membrane. The protein localises to the secreted. Cell surface GPI-bound ligand for Eph receptors, a family of receptor tyrosine kinases which are crucial for migration, repulsion and adhesion during neuronal, vascular and epithelial development. Binds promiscuously Eph receptors residing on adjacent cells, leading to contact-dependent bidirectional signaling into neighboring cells. Plays an important role in angiogenesis and tumor neovascularization. The recruitment of VAV2, VAV3 and PI3-kinase p85 subunit by phosphorylated EPHA2 is critical for EFNA1-induced RAC1 GTPase activation and vascular endothelial cell migration and assembly. Exerts anti-oncogenic effects in tumor cells through activation and down-regulation of EPHA2. Activates EPHA2 by inducing tyrosine phosphorylation which leads to its internalization and degradation. Acts as a negative regulator in the tumorigenesis of gliomas by down-regulating EPHA2 and FAK. Can evoke collapse of embryonic neuronal growth cone and regulates dendritic spine morphogenesis. In Homo sapiens (Human), this protein is Ephrin-A1 (EFNA1).